The chain runs to 227 residues: GFP-like non-fluorescent chromoprotein (227 aa).

Residues 63–65 (EYG) constitute a cross-link (2-iminomethyl-5-imidazolinone (Glu-Gly)). Tyr64 is modified (2,3-didehydrotyrosine).

This sequence belongs to the GFP family. In terms of assembly, homotetramer. Post-translationally, contains a chromophore consisting of modified amino acid residues. The chromophore is formed by autocatalytic backbone condensation between Xaa-N and Gly-(N+2), oxidation of Tyr-(N+1) to didehydrotyrosine, and formation of a double bond to the alpha-amino nitrogen of residue Xaa-N. Maturation of the chromophore requires nothing other than molecular oxygen. The precise stereochemistry of the tyrosine has not been determined.

Non-fluorescent pigment protein that is lilac in color. The polypeptide is GFP-like non-fluorescent chromoprotein (Radianthus crispa (Leathery sea anemone)).